A 459-amino-acid polypeptide reads, in one-letter code: Exodeoxyribonuclease 7 large subunit (459 aa).

Belongs to the XseA family. In terms of assembly, heterooligomer composed of large and small subunits.

It is found in the cytoplasm. The enzyme catalyses Exonucleolytic cleavage in either 5'- to 3'- or 3'- to 5'-direction to yield nucleoside 5'-phosphates.. Functionally, bidirectionally degrades single-stranded DNA into large acid-insoluble oligonucleotides, which are then degraded further into small acid-soluble oligonucleotides. The protein is Exodeoxyribonuclease 7 large subunit of Pseudomonas aeruginosa (strain LESB58).